Consider the following 69-residue polypeptide: Large ribosomal subunit protein uL30 (69 aa).

The protein belongs to the universal ribosomal protein uL30 family. Part of the 50S ribosomal subunit.

The polypeptide is Large ribosomal subunit protein uL30 (Rhizobium etli (strain ATCC 51251 / DSM 11541 / JCM 21823 / NBRC 15573 / CFN 42)).